The following is a 273-amino-acid chain: Hydroxyethylthiazole kinase (273 aa).

Met49 provides a ligand contact to substrate. Lys125 and Thr171 together coordinate ATP. Gly198 serves as a coordination point for substrate.

Belongs to the Thz kinase family. It depends on Mg(2+) as a cofactor.

It catalyses the reaction 5-(2-hydroxyethyl)-4-methylthiazole + ATP = 4-methyl-5-(2-phosphooxyethyl)-thiazole + ADP + H(+). Its pathway is cofactor biosynthesis; thiamine diphosphate biosynthesis; 4-methyl-5-(2-phosphoethyl)-thiazole from 5-(2-hydroxyethyl)-4-methylthiazole: step 1/1. Catalyzes the phosphorylation of the hydroxyl group of 4-methyl-5-beta-hydroxyethylthiazole (THZ). The sequence is that of Hydroxyethylthiazole kinase from Natranaerobius thermophilus (strain ATCC BAA-1301 / DSM 18059 / JW/NM-WN-LF).